A 102-amino-acid chain; its full sequence is DET1- and DDB1-associated protein 1 (102 aa).

Residue A2 is modified to N-acetylalanine. At S33 the chain carries Phosphoserine. Basic and acidic residues-rich tracts occupy residues K66–E75 and A91–T102. The interval K66–T102 is disordered. Residue S95 is modified to Phosphoserine.

Belongs to the DDA1 family. In terms of assembly, component of numerous DCX (DDB1-CUL4-X-box) E3 ubiquitin-protein ligase complexes which consist of a core of DDB1, cullin-4 (CUL4A or CUL4B), DDA1 and RBX1. Component of the DCX(DCAF15) complex, also named CLR4(DCAF15) complex, composed of DCAF15, DDB1, cullin-4 (CUL4A or CUL4B), DDA1 and RBX1. Part of the DDD core complex containing DET1, DDA1 and DDB1; the DDD core complex recruits a specific UBE2E enzyme, such as UBE2E1, UBE2E2 UBE2E3, to form specific DDD-E2 complexes.

It functions in the pathway protein modification; protein ubiquitination. In terms of biological role, functions as a component of numerous distinct DCX (DDB1-CUL4-X-box) E3 ubiquitin-protein ligase complexes which mediate the ubiquitination and subsequent proteasomal degradation of target proteins. In the DCX complexes, acts as a scaffolding subunit required to stabilize the complex. The polypeptide is DET1- and DDB1-associated protein 1 (Bos taurus (Bovine)).